A 201-amino-acid polypeptide reads, in one-letter code: MAKVQVNNVVVLDNPSPFYNPFQFEITFECIEDLSEDLEWKIIYVGSAESEEYDQVLDSVLVGPVPAGRHMFVFQADAPNPGLIPDADAVGVTVVLITCTYRGQEFIRVGYYVNNEYTETELRENPPVKPDFSKLQRNILASNPRVTRFHINWEENTEKLDDSNPHMHPVLSIEARPSASKGWPMSENSLNVMLESHMDCM.

It belongs to the ASF1 family. In terms of assembly, interacts with histone H3 (including both histone H3.1 and H3.3) and histone H4. Interacts with hira and p60.

It is found in the nucleus. Functionally, histone chaperone that facilitates histone deposition and histone exchange and removal during nucleosome assembly and disassembly. Not critical for histone deposition during nucleosome assembly. This chain is Histone chaperone asf1a-A (asf1aa), found in Xenopus laevis (African clawed frog).